Reading from the N-terminus, the 231-residue chain is Fibrillarin-like rRNA/tRNA 2'-O-methyltransferase (231 aa).

Residues 88–89 (TT), 106–107 (EF), 131–132 (DA), and 151–154 (DVAQ) contribute to the S-adenosyl-L-methionine site.

The protein belongs to the methyltransferase superfamily. Fibrillarin family. Interacts with nop5. Component of box C/D small ribonucleoprotein (sRNP) particles that contain rpl7ae, FlpA and nop5, plus a guide RNA.

Functionally, involved in pre-rRNA and tRNA processing. Utilizes the methyl donor S-adenosyl-L-methionine to catalyze the site-specific 2'-hydroxyl methylation of ribose moieties in rRNA and tRNA. Site specificity is provided by a guide RNA that base pairs with the substrate. Methylation occurs at a characteristic distance from the sequence involved in base pairing with the guide RNA. The chain is Fibrillarin-like rRNA/tRNA 2'-O-methyltransferase from Methanococcus aeolicus (strain ATCC BAA-1280 / DSM 17508 / OCM 812 / Nankai-3).